Reading from the N-terminus, the 256-residue chain is Type III pantothenate kinase (256 aa).

6 to 13 (DIGNTNIV) is a binding site for ATP. 107 to 110 (GADI) is a substrate binding site. The active-site Proton acceptor is aspartate 109. A K(+)-binding site is contributed by aspartate 129. Residue threonine 132 participates in ATP binding. Threonine 184 lines the substrate pocket.

The protein belongs to the type III pantothenate kinase family. As to quaternary structure, homodimer. The cofactor is NH4(+). It depends on K(+) as a cofactor.

It is found in the cytoplasm. It carries out the reaction (R)-pantothenate + ATP = (R)-4'-phosphopantothenate + ADP + H(+). It participates in cofactor biosynthesis; coenzyme A biosynthesis; CoA from (R)-pantothenate: step 1/5. Its function is as follows. Catalyzes the phosphorylation of pantothenate (Pan), the first step in CoA biosynthesis. This is Type III pantothenate kinase from Bifidobacterium longum (strain DJO10A).